Consider the following 739-residue polypeptide: Phosphoribosylformylglycinamidine synthase subunit PurL (739 aa).

Histidine 53 is an active-site residue. Residues tyrosine 56 and lysine 95 each contribute to the ATP site. Glutamate 97 is a binding site for Mg(2+). Substrate is bound by residues 98-101 (SHNH) and arginine 120. The active-site Proton acceptor is histidine 99. Aspartate 121 lines the Mg(2+) pocket. Glutamine 244 contacts substrate. Aspartate 274 contributes to the Mg(2+) binding site. 318–320 (ESQ) lines the substrate pocket. ATP is bound by residues aspartate 501 and glycine 538. Asparagine 539 serves as a coordination point for Mg(2+). Serine 541 is a substrate binding site.

This sequence belongs to the FGAMS family. In terms of assembly, monomer. Part of the FGAM synthase complex composed of 1 PurL, 1 PurQ and 2 PurS subunits.

It localises to the cytoplasm. It carries out the reaction N(2)-formyl-N(1)-(5-phospho-beta-D-ribosyl)glycinamide + L-glutamine + ATP + H2O = 2-formamido-N(1)-(5-O-phospho-beta-D-ribosyl)acetamidine + L-glutamate + ADP + phosphate + H(+). It functions in the pathway purine metabolism; IMP biosynthesis via de novo pathway; 5-amino-1-(5-phospho-D-ribosyl)imidazole from N(2)-formyl-N(1)-(5-phospho-D-ribosyl)glycinamide: step 1/2. Its function is as follows. Part of the phosphoribosylformylglycinamidine synthase complex involved in the purines biosynthetic pathway. Catalyzes the ATP-dependent conversion of formylglycinamide ribonucleotide (FGAR) and glutamine to yield formylglycinamidine ribonucleotide (FGAM) and glutamate. The FGAM synthase complex is composed of three subunits. PurQ produces an ammonia molecule by converting glutamine to glutamate. PurL transfers the ammonia molecule to FGAR to form FGAM in an ATP-dependent manner. PurS interacts with PurQ and PurL and is thought to assist in the transfer of the ammonia molecule from PurQ to PurL. In Listeria monocytogenes serotype 4b (strain F2365), this protein is Phosphoribosylformylglycinamidine synthase subunit PurL.